Reading from the N-terminus, the 347-residue chain is Dihydroorotase (347 aa).

Zn(2+) is bound by residues His-14 and His-16. Substrate-binding positions include 16–18 (HLR) and Asn-42. Zn(2+)-binding residues include Lys-100, His-137, and His-175. Lys-100 carries the N6-carboxylysine modification. Substrate is bound at residue His-137. Leu-220 provides a ligand contact to substrate. Asp-248 provides a ligand contact to Zn(2+). Asp-248 is a catalytic residue. Substrate-binding residues include His-252 and Ala-264.

Belongs to the metallo-dependent hydrolases superfamily. DHOase family. Class II DHOase subfamily. As to quaternary structure, homodimer. Requires Zn(2+) as cofactor.

It carries out the reaction (S)-dihydroorotate + H2O = N-carbamoyl-L-aspartate + H(+). It participates in pyrimidine metabolism; UMP biosynthesis via de novo pathway; (S)-dihydroorotate from bicarbonate: step 3/3. Functionally, catalyzes the reversible cyclization of carbamoyl aspartate to dihydroorotate. The polypeptide is Dihydroorotase (Pseudomonas savastanoi pv. phaseolicola (strain 1448A / Race 6) (Pseudomonas syringae pv. phaseolicola (strain 1448A / Race 6))).